Consider the following 185-residue polypeptide: Ribosome-recycling factor (185 aa).

It belongs to the RRF family.

The protein resides in the cytoplasm. In terms of biological role, responsible for the release of ribosomes from messenger RNA at the termination of protein biosynthesis. May increase the efficiency of translation by recycling ribosomes from one round of translation to another. In Clostridium botulinum (strain Alaska E43 / Type E3), this protein is Ribosome-recycling factor.